The chain runs to 92 residues: Small ribosomal subunit protein uS19 (92 aa).

The protein belongs to the universal ribosomal protein uS19 family.

Its function is as follows. Protein S19 forms a complex with S13 that binds strongly to the 16S ribosomal RNA. This chain is Small ribosomal subunit protein uS19, found in Proteus mirabilis (strain HI4320).